Here is a 451-residue protein sequence, read N- to C-terminus: Trigger factor (451 aa).

The 86-residue stretch at 171–256 (GDRVKVNFKG…ATAIEAPEDK (86 aa)) folds into the PPIase FKBP-type domain.

It belongs to the FKBP-type PPIase family. Tig subfamily.

The protein resides in the cytoplasm. The catalysed reaction is [protein]-peptidylproline (omega=180) = [protein]-peptidylproline (omega=0). Functionally, involved in protein export. Acts as a chaperone by maintaining the newly synthesized protein in an open conformation. Functions as a peptidyl-prolyl cis-trans isomerase. The polypeptide is Trigger factor (Bradyrhizobium sp. (strain ORS 278)).